Here is a 97-residue protein sequence, read N- to C-terminus: uncharacterized protein (97 aa).

The tract at residues isoleucine 27–aspartate 50 is disordered.

This is an uncharacterized protein from Caldicellulosiruptor saccharolyticus (Caldocellum saccharolyticum).